The primary structure comprises 137 residues: Small ribosomal subunit protein uS9c (137 aa).

The interval 106-137 is disordered; sequence KSEGYLTRDPRVKERKKYGLKKARKAPQFSKR. Residues 118–137 are compositionally biased toward basic residues; sequence KERKKYGLKKARKAPQFSKR.

The protein belongs to the universal ribosomal protein uS9 family.

It localises to the plastid. It is found in the chloroplast. This Pyropia yezoensis (Susabi-nori) protein is Small ribosomal subunit protein uS9c (rps9).